The chain runs to 135 residues: Small ribosomal subunit protein bS6 (135 aa).

Lysine 93 is subject to N6-acetyllysine. The disordered stretch occupies residues 98–135 (EASPMVKAKDERRERRDDFANETADDAEAGDSEEEEEE). Residues 104 to 116 (KAKDERRERRDDF) show a composition bias toward basic and acidic residues. The segment covering 120 to 135 (TADDAEAGDSEEEEEE) has biased composition (acidic residues).

Belongs to the bacterial ribosomal protein bS6 family. In terms of assembly, part of the 30S ribosomal subunit. Interacts weakly with uL2 in one of the 3.5 A resolved structures. 5 different forms of the protein, varying only in the number of C-terminal glutamate residues, were isolated. The sequence shown is form bS6-6, which is the longest. The first two Glu are encoded by the rpsF gene, the other Glu are added post-translationally by the RimK enzyme.

Its function is as follows. Binds together with bS18 to 16S ribosomal RNA. The sequence is that of Small ribosomal subunit protein bS6 (rpsF) from Escherichia coli (strain K12).